Here is a 547-residue protein sequence, read N- to C-terminus: Inositol 1,4,5-trisphosphate receptor-interacting protein-like 1 (547 aa).

The signal sequence occupies residues 1–16 (MAVISLLFLAVMYVVH). Over 17–96 (HPLMVSDRMD…PFQASGQDGG (80 aa)) the chain is Extracellular. Positions 28–66 (DTLARSRQLEKRMSEEMRQLEIEFEERSRAAEEKQKAEN) form a coiled coil. A helical membrane pass occupies residues 97–117 (PLGWMLGNLWNAGLFCLFLIF). Topologically, residues 118–547 (ELLRQNMQHE…LPCSPLAGGL (430 aa)) are cytoplasmic.

Belongs to the ITPRIP family.

The protein localises to the cell membrane. Its function is as follows. Functions as a ligand of CD3E, inhibiting TCR-CD3 complex signaling to regulate T cell activation. Induces stable CD3E-NCK1 binding, thereby preventing the CD3E-ZAP70 interaction and subsequently inhibiting the activation of the downstream ERK-NFkB signaling cascade and calcium influx. This chain is Inositol 1,4,5-trisphosphate receptor-interacting protein-like 1 (Itpripl1), found in Rattus norvegicus (Rat).